We begin with the raw amino-acid sequence, 730 residues long: Cyclin-dependent kinase 12 (730 aa).

2 disordered regions span residues 1 to 230 and 246 to 283; these read MEIS…APFS and FSLS…IATR. The segment covering 9–21 has biased composition (basic and acidic residues); sequence THERDRKGSYGHR. A compositionally biased stretch (polar residues) spans 57–67; the sequence is SISPQYKQRNW. Basic and acidic residues predominate over residues 75–94; it reads GRDRGRNDFSYRKKGKDYNK. 2 stretches are compositionally biased toward basic residues: residues 95-122 and 151-163; these read RRDK…KRRN and KSKK…RKHS. Over residues 194–203 the composition is skewed to low complexity; that stretch reads FNINPFQPMF. Pro residues predominate over residues 204–230; that stretch reads SQPPPPPLPPNSQFMTPPPRPPPAPFS. The Protein kinase domain occupies 313–605; the sequence is MLDQIGEGTY…AKEALNHPWI (293 aa). ATP is bound by residues 317-325, Lys340, and 398-403; these read IGEGTYGQV and EYVDHD. Asp444 acts as the Proton acceptor in catalysis. A disordered region spans residues 623 to 730; that stretch reads DCHEMWSKKQ…QSQYQSVFFK (108 aa). ATP is bound at residue His625. Residues 676–688 show a composition bias toward basic residues; that stretch reads NHHHHHHHSHHHA. Residues 714-730 show a composition bias toward polar residues; it reads NNHQPVPQSQYQSVFFK.

Belongs to the protein kinase superfamily. CMGC Ser/Thr protein kinase family. CDC2/CDKX subfamily.

It is found in the nucleus. It catalyses the reaction [DNA-directed RNA polymerase] + ATP = phospho-[DNA-directed RNA polymerase] + ADP + H(+). The catalysed reaction is L-seryl-[protein] + ATP = O-phospho-L-seryl-[protein] + ADP + H(+). It carries out the reaction L-threonyl-[protein] + ATP = O-phospho-L-threonyl-[protein] + ADP + H(+). In terms of biological role, cyclin-dependent kinase which displays CTD kinase activity: hyperphosphorylates 'Ser-2' in the C-terminal heptapeptide repeat domain (CTD) of the largest RNA polymerase II subunit, thereby acting as a key regulator of transcription elongation. Required for normal reproduction. This is Cyclin-dependent kinase 12 from Caenorhabditis elegans.